We begin with the raw amino-acid sequence, 251 residues long: 3-deoxy-manno-octulosonate cytidylyltransferase (251 aa).

This sequence belongs to the KdsB family.

It is found in the cytoplasm. The catalysed reaction is 3-deoxy-alpha-D-manno-oct-2-ulosonate + CTP = CMP-3-deoxy-beta-D-manno-octulosonate + diphosphate. The protein operates within nucleotide-sugar biosynthesis; CMP-3-deoxy-D-manno-octulosonate biosynthesis; CMP-3-deoxy-D-manno-octulosonate from 3-deoxy-D-manno-octulosonate and CTP: step 1/1. Its pathway is bacterial outer membrane biogenesis; lipopolysaccharide biosynthesis. Functionally, activates KDO (a required 8-carbon sugar) for incorporation into bacterial lipopolysaccharide in Gram-negative bacteria. This chain is 3-deoxy-manno-octulosonate cytidylyltransferase, found in Vibrio vulnificus (strain YJ016).